We begin with the raw amino-acid sequence, 188 residues long: MSSTEKRLLKEYRAVKKELTEKRSPIHDTGIVDLHPLEDGLFRWSAVIRGPDQSPFEDALWKLEIDIPTNYPLDPPKIKFVVFGEEKIRQLQRKTSSGARKVCYKMPHPNVNFKTGEICLDILQQKWSPAWTLQSALVAIVVLLANPEPLSPLNIDMANLLKCDDTTAYKDLVHYYIAKYSAYESNDV.

The region spanning 3–182 is the UBC core domain; that stretch reads STEKRLLKEY…VHYYIAKYSA (180 aa). The active-site Glycyl thioester intermediate is the C119.

The protein belongs to the ubiquitin-conjugating enzyme family.

The catalysed reaction is S-ubiquitinyl-[E1 ubiquitin-activating enzyme]-L-cysteine + [E2 ubiquitin-conjugating enzyme]-L-cysteine = [E1 ubiquitin-activating enzyme]-L-cysteine + S-ubiquitinyl-[E2 ubiquitin-conjugating enzyme]-L-cysteine.. The protein operates within protein modification; protein ubiquitination. Functionally, catalyzes the covalent attachment of ubiquitin to other proteins. Essential for peroxisome biogenesis. Required for UBC4-independent ubiquitination of PEX5. This Pichia angusta (Yeast) protein is Ubiquitin-conjugating enzyme E2-21 kDa (PEX4).